The primary structure comprises 350 residues: Inhibin beta E chain (350 aa).

An N-terminal signal peptide occupies residues 1–21; it reads MGLSNVQLWTILLWALAWVQS. Positions 22 to 236 are excised as a propeptide; sequence TRSACPSCGA…EPGAGRARRR (215 aa). The N-linked (GlcNAc...) asparagine glycan is linked to N198. Disulfide bonds link C240–C248, C247–C315, C276–C347, and C280–C349.

The protein belongs to the TGF-beta family. In terms of assembly, homodimeric or heterodimeric through association with alpha and beta subunits, linked by one or more disulfide bonds. Inhibins are heterodimers of one alpha and one beta subunit. Activins are homo- or heterodimers of beta subunits only.

The protein localises to the secreted. Its function is as follows. Inhibins and activins inhibit and activate, respectively, the secretion of follitropin by the pituitary gland. Inhibins/activins are involved in regulating a number of diverse functions such as hypothalamic and pituitary hormone secretion, gonadal hormone secretion, germ cell development and maturation, erythroid differentiation, insulin secretion, nerve cell survival, embryonic axial development or bone growth, depending on their subunit composition. Inhibins appear to oppose the functions of activins. Functionally, activin E is a homodimer of INHBE secreted by the liver that plays a crucial role in regulating metabolic homeostasis particularly in lipid metabolism and energy homeostasis. Plays a central role in the regulation of adipose tissue lipolysis by preventing the influx of fatty acids from adipose tissue into the liver. Mechanistically, signals via ACVR1C to activate SMAD2/3 signaling, suppressing PPARG target genes in adipose tissue, thereby reducing liver lipid content and improving glycemic control. Induces beige adipocyte formation and thermogenesis in response to cold exposure. The sequence is that of Inhibin beta E chain (Inhbe) from Rattus norvegicus (Rat).